Consider the following 423-residue polypeptide: Histidine--tRNA ligase (423 aa).

It belongs to the class-II aminoacyl-tRNA synthetase family. In terms of assembly, homodimer.

It is found in the cytoplasm. It catalyses the reaction tRNA(His) + L-histidine + ATP = L-histidyl-tRNA(His) + AMP + diphosphate + H(+). This Anoxybacillus flavithermus (strain DSM 21510 / WK1) protein is Histidine--tRNA ligase.